Here is a 200-residue protein sequence, read N- to C-terminus: MPADPALPDPVPPGPTAPVPTDYPVRLAVDGAEGPWEALVPGVAALVEQAVLAAVAAGDPSGYGLTPGTPLEISLLLTDDAAVQALNRDYRGQDKPTNVLSFAALDAEEPLPEDGEPVLLGDVALARETVVREAADLGIAPADHVFHLVVHGVLHLLGYDHEEEEEALDMEGLETAILGARGIADPYADARGPEQEGSDR.

A compositionally biased stretch (pro residues) spans 1–18 (MPADPALPDPVPPGPTAP). The tract at residues 1–22 (MPADPALPDPVPPGPTAPVPTD) is disordered. Zn(2+) is bound by residues histidine 151, histidine 155, and histidine 161.

This sequence belongs to the endoribonuclease YbeY family. Requires Zn(2+) as cofactor.

It localises to the cytoplasm. Functionally, single strand-specific metallo-endoribonuclease involved in late-stage 70S ribosome quality control and in maturation of the 3' terminus of the 16S rRNA. In Rhodospirillum rubrum (strain ATCC 11170 / ATH 1.1.1 / DSM 467 / LMG 4362 / NCIMB 8255 / S1), this protein is Endoribonuclease YbeY.